The chain runs to 254 residues: Alcohol dehydrogenase (254 aa).

9 to 32 (IFVAGLGGIGLDTSRELVKRDLKN) lines the NAD(+) pocket. Ser138 contributes to the substrate binding site. Tyr151 functions as the Proton acceptor in the catalytic mechanism.

Belongs to the short-chain dehydrogenases/reductases (SDR) family. Homodimer.

It carries out the reaction a primary alcohol + NAD(+) = an aldehyde + NADH + H(+). It catalyses the reaction a secondary alcohol + NAD(+) = a ketone + NADH + H(+). In Drosophila paulistorum (Fruit fly), this protein is Alcohol dehydrogenase (Adh).